The sequence spans 1165 residues: Transient receptor potential cation channel subfamily M member 5 (1165 aa).

Topologically, residues 1–715 (MVEKSSERFD…LRRWNRFWSA (715 aa)) are cytoplasmic. A Phosphoserine modification is found at Ser121. Positions 212, 324, 333, 336, and 337 each coordinate Ca(2+). A helical transmembrane segment spans residues 716–740 (PVTVFMGNVIMYFAFLILFSYVLLL). Residues 741–751 (DFRPPPPYGPS) are Extracellular-facing. The chain crosses the membrane as a helical span at residues 752–771 (AAEIILYFWVFTLVLEEIRQ). Ca(2+) contacts are provided by Glu768 and Gln771. Residues 772–792 (SFFTDEDMSILKKMKLYVEDN) lie on the Cytoplasmic side of the membrane. A helical transmembrane segment spans residues 793 to 811 (WNKCDMVAISLFVVGLSCR). Positions 794 and 797 each coordinate Ca(2+). Residues 812-818 (MAMSTYE) are Extracellular-facing. Residues 819 to 841 (AGRTVLALDFMVFTLRLIHIFAI) form a helical membrane-spanning segment. Over 842–850 (HKQLGPKII) the chain is Cytoplasmic. Residues 851–880 (IVERMIKDVFFFLFFLSVWLIAYGVTTQAL) traverse the membrane as a helical segment. Residues 881-889 (LHPNDPRID) are Extracellular-facing. The segment at residues 890 to 930 (WVFRRALYRPYLHIFGQIPLEEIDAAKMPDDNCTTDVQEII) is an intramembrane region (pore-forming). Residues 904-906 (FGQ) carry the Selectivity filter motif. Residues 931 to 942 (LGTLPPCPNIYA) are Extracellular-facing. The chain crosses the membrane as a helical span at residues 943 to 977 (NWLVILLLVIYLLVTNVLLLNLLIAMFSYTFQVVQ). Over 978–1165 (ENADIFWKFQ…TDKKLPFIDH (188 aa)) the chain is Cytoplasmic. Glu994 is a binding site for Ca(2+). The tract at residues 1122 to 1165 (RDAPKAPRSIAGSSRDQQPQGAKRQQPAGHPAYGTDKKLPFIDH) is disordered. The segment covering 1132-1141 (AGSSRDQQPQ) has biased composition (polar residues). Basic and acidic residues predominate over residues 1156–1165 (TDKKLPFIDH).

It belongs to the transient receptor (TC 1.A.4) family. LTrpC subfamily. TRPM5 sub-subfamily. In terms of assembly, homotetramer.

It is found in the cell membrane. It carries out the reaction Na(+)(in) = Na(+)(out). The enzyme catalyses K(+)(in) = K(+)(out). Its activity is regulated as follows. Ca(2+)-activated cation channel. Displays voltage dependence modulation. Regulated by PI(4,5)P2 levels. PI(4,5)P 2 reverses the Ca(2+) -induced desensitization of channels. Is highly temperature-sensitive. Monovalent cation-selective ion channel activated by intracellular Ca(2+) in a voltage- and temperature-dependent manner. Mediates the transport of Na(+), K(+) and Cs(+) ions equally well. Activated directly by increase in intracellular Ca(2+), but is impermeable to it. The activation mechanism of TRPM5 involves a multistep process. TRPM5 activation involves ligand binding (i.e., tastant molecule, glucose stimulation) to Gq/G-protein coupled receptors (GPCR) and leads to the breakdown of phosphatidylinositol bisphosphate (PIP2) into diacylglycerol (DAG) and inositol trisphosphate (IP3), IP3 binds to its receptors in the endoplasmic reticulum and cause Ca(2+) release. Simultaneously with the intracellular Ca(2+) release, DAG activates the protein kinase C (PKC), which phosphorylates the TRPM5 channel. This phosphorylation combined with the bound Ca(2+), leads to a robust inward current allowing the entry of sodium ions (Na+) into the cell. This ion influx depolarizes the cell membrane, generating action potentials that propagate TRPM5 signals. The chain is Transient receptor potential cation channel subfamily M member 5 from Danio rerio (Zebrafish).